A 999-amino-acid chain; its full sequence is Caspase recruitment domain-containing protein 14 (999 aa).

Positions 15-107 (DEEMLWDMLE…DVYTLVTGLQ (93 aa)) constitute a CARD domain. Positions 125-411 (TECLAGAISS…QLRRLQAEAP (287 aa)) form a coiled coil. The maintains the protein in an inactive state stretch occupies residues 409–565 (EAPGGPKQEA…RRPARKILSQ (157 aa)). At S541 the chain carries Phosphoserine. A PDZ domain is found at 572 to 655 (QGDALLEQIG…SCYLSVKINT (84 aa)). The region spanning 803 to 986 (SESCFTLAPY…LLSCVRLAIA (184 aa)) is the Guanylate kinase-like domain.

Interacts (via CARD domain) with BCL10 (via CARD domain). Forms a complex with MALT1 and BCL10; resulting in the formation of a CBM (CARD14-BLC10-MALT1) complex. Interacts with TRAF2, TRAF3 and TRAF6.

It localises to the cytoplasm. Its function is as follows. Acts as a scaffolding protein that can activate the inflammatory transcription factor NF-kappa-B and p38/JNK MAP kinase signaling pathways. Forms a signaling complex with BCL10 and MALT1, and activates MALT1 proteolytic activity and inflammatory gene expression. MALT1 is indispensable for CARD14-induced activation of NF-kappa-B and p38/JNK MAP kinases. May play a role in signaling mediated by TRAF2, TRAF3 and TRAF6 and protects cells against apoptosis. The chain is Caspase recruitment domain-containing protein 14 (Card14) from Mus musculus (Mouse).